We begin with the raw amino-acid sequence, 508 residues long: Probable cytosol aminopeptidase (508 aa).

Mn(2+)-binding residues include K274 and D279. The active site involves K286. Mn(2+)-binding residues include D297, D356, and E358. The active site involves R360.

It belongs to the peptidase M17 family. Mn(2+) serves as cofactor.

The protein resides in the cytoplasm. It carries out the reaction Release of an N-terminal amino acid, Xaa-|-Yaa-, in which Xaa is preferably Leu, but may be other amino acids including Pro although not Arg or Lys, and Yaa may be Pro. Amino acid amides and methyl esters are also readily hydrolyzed, but rates on arylamides are exceedingly low.. It catalyses the reaction Release of an N-terminal amino acid, preferentially leucine, but not glutamic or aspartic acids.. Functionally, presumably involved in the processing and regular turnover of intracellular proteins. Catalyzes the removal of unsubstituted N-terminal amino acids from various peptides. This is Probable cytosol aminopeptidase from Cutibacterium acnes (strain DSM 16379 / KPA171202) (Propionibacterium acnes).